Here is a 207-residue protein sequence, read N- to C-terminus: ATP-dependent Clp protease proteolytic subunit (207 aa).

The active-site Nucleophile is S111. The active site involves H136.

Belongs to the peptidase S14 family. In terms of assembly, fourteen ClpP subunits assemble into 2 heptameric rings which stack back to back to give a disk-like structure with a central cavity, resembling the structure of eukaryotic proteasomes.

It is found in the cytoplasm. It carries out the reaction Hydrolysis of proteins to small peptides in the presence of ATP and magnesium. alpha-casein is the usual test substrate. In the absence of ATP, only oligopeptides shorter than five residues are hydrolyzed (such as succinyl-Leu-Tyr-|-NHMec, and Leu-Tyr-Leu-|-Tyr-Trp, in which cleavage of the -Tyr-|-Leu- and -Tyr-|-Trp bonds also occurs).. In terms of biological role, cleaves peptides in various proteins in a process that requires ATP hydrolysis. Has a chymotrypsin-like activity. Plays a major role in the degradation of misfolded proteins. The chain is ATP-dependent Clp protease proteolytic subunit from Pectobacterium atrosepticum (strain SCRI 1043 / ATCC BAA-672) (Erwinia carotovora subsp. atroseptica).